The following is a 198-amino-acid chain: RxLR effector protein CRE4 (198 aa).

The signal sequence occupies residues 1 to 20; it reads MLRSFLLIVATVSLFGQCKP. Residues 43 to 52 carry the RxLR-dEER motif; that stretch reads RFVRTNDEER.

It belongs to the RxLR effector family.

It is found in the secreted. It localises to the host cytoplasm. Its subcellular location is the host nucleus. The protein resides in the host nucleolus. Effector that is involved in host plant infection. Contributes to virulence during the early infection stage, by inhibiting plant defense responses induced by both PAMP-triggered immunity (PTI) and effector-triggered immunity (ETI). The protein is RxLR effector protein CRE4 (CRE4) of Phytophthora infestans (strain T30-4) (Potato late blight agent).